A 260-amino-acid polypeptide reads, in one-letter code: Coiled-coil domain-containing protein 127 (260 aa).

A coiled-coil region spans residues 47-135 (ESQKEIEKAR…QIIQEKSQRQ (89 aa)).

This is Coiled-coil domain-containing protein 127 (Ccdc127) from Rattus norvegicus (Rat).